A 571-amino-acid polypeptide reads, in one-letter code: Proline--tRNA ligase (571 aa).

The protein belongs to the class-II aminoacyl-tRNA synthetase family. ProS type 1 subfamily. Homodimer.

The protein resides in the cytoplasm. It carries out the reaction tRNA(Pro) + L-proline + ATP = L-prolyl-tRNA(Pro) + AMP + diphosphate. In terms of biological role, catalyzes the attachment of proline to tRNA(Pro) in a two-step reaction: proline is first activated by ATP to form Pro-AMP and then transferred to the acceptor end of tRNA(Pro). As ProRS can inadvertently accommodate and process non-cognate amino acids such as alanine and cysteine, to avoid such errors it has two additional distinct editing activities against alanine. One activity is designated as 'pretransfer' editing and involves the tRNA(Pro)-independent hydrolysis of activated Ala-AMP. The other activity is designated 'posttransfer' editing and involves deacylation of mischarged Ala-tRNA(Pro). The misacylated Cys-tRNA(Pro) is not edited by ProRS. In Vibrio cholerae serotype O1 (strain ATCC 39541 / Classical Ogawa 395 / O395), this protein is Proline--tRNA ligase.